The sequence spans 142 residues: Immunoglobulin omega chain (142 aa).

Residues 1-19 form the signal peptide; the sequence is MAWTSVLLMLLAHLTGCGP. Residues 20–41 are framework-1; that stretch reads QPMVHQPPSASSSLGATIRLSC. The cysteines at positions 41 and 115 are disulfide-linked. A complementarity-determining-1 region spans residues 42–56; it reads TLSNDHNIGIYSIYW. Positions 57 to 70 are framework-2; the sequence is YQQRPGHPPRFLLR. The interval 71–81 is complementarity-determining-2; it reads YFSHSDKHQGP. Residues 82–115 form a framework-3 region; sequence DIPPRFSGSKDTARNLGYLSISELQPEDEAVYYC.

This sequence belongs to the immunoglobulin superfamily. In terms of tissue distribution, only expressed by pre-B-cells.

Functionally, associates with the Ig-mu chain to form a molecular complex that is expressed on the surface of pre-B-cells. This complex presumably regulates Ig gene rearrangements in the early steps of B-cell differentiation. The sequence is that of Immunoglobulin omega chain from Mus musculus (Mouse).